The sequence spans 392 residues: Chaperone protein DnaJ (392 aa).

Residues 2-67 (DYYTILGVAK…QKRESYDRYG (66 aa)) form the J domain. The CR-type zinc-finger motif lies at 149 to 227 (GVEKELLVSG…CRGQGRIKDK (79 aa)). Zn(2+) contacts are provided by Cys162, Cys165, Cys179, Cys182, Cys201, Cys204, Cys215, and Cys218. 4 CXXCXGXG motif repeats span residues 162 to 169 (CDACSGSG), 179 to 186 (CDRCKGSG), 201 to 208 (CPDCSGEG), and 215 to 222 (CSVCRGQG).

The protein belongs to the DnaJ family. Homodimer. Requires Zn(2+) as cofactor.

It is found in the cytoplasm. Its function is as follows. Participates actively in the response to hyperosmotic and heat shock by preventing the aggregation of stress-denatured proteins and by disaggregating proteins, also in an autonomous, DnaK-independent fashion. Unfolded proteins bind initially to DnaJ; upon interaction with the DnaJ-bound protein, DnaK hydrolyzes its bound ATP, resulting in the formation of a stable complex. GrpE releases ADP from DnaK; ATP binding to DnaK triggers the release of the substrate protein, thus completing the reaction cycle. Several rounds of ATP-dependent interactions between DnaJ, DnaK and GrpE are required for fully efficient folding. Also involved, together with DnaK and GrpE, in the DNA replication of plasmids through activation of initiation proteins. The sequence is that of Chaperone protein DnaJ from Chlamydia trachomatis serovar L2 (strain ATCC VR-902B / DSM 19102 / 434/Bu).